Consider the following 264-residue polypeptide: Chymotrypsin-like protease CTRL-1 (264 aa).

A signal peptide spans 1–18 (MLLLSLTLSLVLLGSSWG). Residues 19-33 (CGIPAIKPALSFSQR) constitute a propeptide, activation peptide. 5 disulfide bridges follow: C19-C141, C60-C76, C155-C220, C187-C201, and C210-C239. The 229-residue stretch at 34–262 (IVNGENAVLG…FSTWINQVIA (229 aa)) folds into the Peptidase S1 domain. The active-site Charge relay system is the H75. An N-linked (GlcNAc...) asparagine glycan is attached at N114. D121 functions as the Charge relay system in the catalytic mechanism. Residue S214 is the Charge relay system of the active site.

It belongs to the peptidase S1 family.

This chain is Chymotrypsin-like protease CTRL-1 (CTRL), found in Homo sapiens (Human).